A 340-amino-acid polypeptide reads, in one-letter code: N-acetyl-gamma-glutamyl-phosphate reductase (340 aa).

Residue Cys-148 is part of the active site.

This sequence belongs to the NAGSA dehydrogenase family. Type 1 subfamily.

The protein localises to the cytoplasm. The enzyme catalyses N-acetyl-L-glutamate 5-semialdehyde + phosphate + NADP(+) = N-acetyl-L-glutamyl 5-phosphate + NADPH + H(+). The protein operates within amino-acid biosynthesis; L-arginine biosynthesis; N(2)-acetyl-L-ornithine from L-glutamate: step 3/4. Functionally, catalyzes the NADPH-dependent reduction of N-acetyl-5-glutamyl phosphate to yield N-acetyl-L-glutamate 5-semialdehyde. The protein is N-acetyl-gamma-glutamyl-phosphate reductase of Methanosarcina mazei (strain ATCC BAA-159 / DSM 3647 / Goe1 / Go1 / JCM 11833 / OCM 88) (Methanosarcina frisia).